Reading from the N-terminus, the 331-residue chain is N-arachidonyl glycine receptor (331 aa).

At 1-26 (MITLNNQDQPVPFNSSHPDEYKIAAL) the chain is on the extracellular side. N-linked (GlcNAc...) asparagine glycosylation is present at Asn-14. A helical membrane pass occupies residues 27–47 (VFYSCIFIIGLFVNITALWVF). The Cytoplasmic portion of the chain corresponds to 48-56 (SCTTKKRTT). A helical transmembrane segment spans residues 57 to 77 (VTIYMMNVALVDLIFIMTLPF). Over 78-95 (RMFYYAKDEWPFGEYFCQ) the chain is Extracellular. The cysteines at positions 94 and 172 are disulfide-linked. A helical membrane pass occupies residues 96 to 116 (ILGALTVFYPSIALWLLAFIS). The Cytoplasmic segment spans residues 117 to 138 (ADRYMAIVQPKYAKELKNTCKA). A helical transmembrane segment spans residues 139–159 (VLACVGVWIMTLTTTTPLLLL). Residues 160–191 (YKDPDKDSTPATCLKISDIIYLKAVNVLNLTR) lie on the Extracellular side of the membrane. A helical membrane pass occupies residues 192–212 (LTFFFLIPLFIMIGCYLVIIH). At 213–232 (NLLHGRTSKLKPKVKEKSIR) the chain is on the cytoplasmic side. Residues 233-253 (IIITLLVQVLVCFMPFHICFA) traverse the membrane as a helical segment. Over 254–268 (FLMLGTGENSYNPWG) the chain is Extracellular. The helical transmembrane segment at 269-289 (AFTTFLMNLSTCLDVILYYIV) threads the bilayer. At 290 to 331 (SKQFQARVISVMLYRNYLRSMRRKSFRSGSLRSLSNINSEML) the chain is on the cytoplasmic side. Ser-322 carries the phosphoserine modification.

Belongs to the G-protein coupled receptor 1 family. In terms of tissue distribution, expressed in midpiece of spermatozoon (at protein level). Most abundant in testis and spleen. Highly expressed in CD4 and CD8-positive T-cells as well as CD19-positive B-cells.

It is found in the cell membrane. Its subcellular location is the cytoplasmic vesicle membrane. In terms of biological role, g protein-coupled receptor (GPCR) that plays a role in diverse physiological processes particularly within the immune and nervous systems. Becomes active when triggered by various endogenous ligands including endocannabinoid N-arachidonyl glycine (NAGly), delta-9-tetrahydrocannabinol or resolvin D2/RvD2 derived from the omega-3 fatty acid docosahexaenoic acid (DHA). Upon RvD2 binding, facilitates the resolution of inflammation, aiding in tissue repair and homeostasis. Mechanistically, RvD2 ligation initiates Galphas protein coupling, activation of cAMP-PKA signaling pathway and phosphorylation of STAT3, leading to RvD2-stimulated macrophage phagocytosis. Mediates NAGly-induced process of reorganization of actin filaments and induction of acrosomal exocytosis. Activation by N-arachidonoyl glycine (NAGly) can also induce apoptosis in macrophages. Plays a role in homeostasis of CD8+ subsets of intraepithelial lymphocytes (IELs) (CD8alphaalpha and CD8alphabeta IELs) in small intestine by supporting preferential migration of CD8alphaalpha T-cells to intraepithelial compartment over lamina propria compartment, and by mediating their reconstitution into small intestine after bone marrow transplant. Also participates in hypotensive responses, mediating reduction in intraocular and blood pressure. The chain is N-arachidonyl glycine receptor (GPR18) from Homo sapiens (Human).